The primary structure comprises 116 residues: UPF0134 protein MPN_038 (116 aa).

This sequence belongs to the UPF0134 family.

The sequence is that of UPF0134 protein MPN_038 from Mycoplasma pneumoniae (strain ATCC 29342 / M129 / Subtype 1) (Mycoplasmoides pneumoniae).